Consider the following 1123-residue polypeptide: Ubiquitin carboxyl-terminal hydrolase 43 (1123 aa).

The interval 1–102 (MDLGPGDAAG…DGARPPGAQG (102 aa)) is disordered. Residues 17–28 (RPRRRRSLRRLF) show a composition bias toward basic residues. Low complexity predominate over residues 29 to 39 (SRFLLALGSRS). A USP domain is found at 101–710 (QGLKNHGNTC…GAYILFYQKR (610 aa)). Catalysis depends on cysteine 110, which acts as the Nucleophile. The tract at residues 202-221 (EGSSRGPVSEKLPPEATKTS) is disordered. Histidine 668 functions as the Proton acceptor in the catalytic mechanism. Arginine 746 is subject to Asymmetric dimethylarginine. Disordered regions lie at residues 795-826 (ISMK…EKPP), 854-886 (TGTA…IERG), 959-1049 (FQMG…RIPE), and 1068-1099 (SSLR…QASY). Serine 969 is subject to Phosphoserine. Basic and acidic residues predominate over residues 979-990 (KDSRRGTSELDR). The span at 1016 to 1027 (VSPQVPPVSLVS) shows a compositional bias: low complexity. Serine 1041 is modified (phosphoserine).

Belongs to the peptidase C19 family. In terms of tissue distribution, expressed in brain, aorta and lung at low levels.

It carries out the reaction Thiol-dependent hydrolysis of ester, thioester, amide, peptide and isopeptide bonds formed by the C-terminal Gly of ubiquitin (a 76-residue protein attached to proteins as an intracellular targeting signal).. In terms of biological role, may recognize and hydrolyze the peptide bond at the C-terminal Gly of ubiquitin. Involved in the processing of poly-ubiquitin precursors as well as that of ubiquitinated proteins. The sequence is that of Ubiquitin carboxyl-terminal hydrolase 43 (USP43) from Homo sapiens (Human).